Here is a 368-residue protein sequence, read N- to C-terminus: MSLADQVLAVNDDLPIRTHQPVHSGKVRSVYWLTEQDSRRLIKEKGYPVAEDAPLAIMVISDRISAFDCIWHAEGGVHGVPGKGAALNAISNHWFKLFKQHGLAESHILDIPHPFVWIVQKARPIKIEAICRQYITGSMWRAYAKGEREFCGITLPEGLEKDSQLPELLMTPSTKGILRGIPGVPEADDVNISRQDIEANYAAFNFNQPQDIDHYETLLKQGFAVISEALKSVGQLFVDTKFEFGYVADQQGQQKLIYMDEVGTPDSSRIWDAQQYQQGKIVENSKEGFRQFLLNYFPDPDILLNKDRMPEREALARDNALPLEALMDISRTYLGIAEKITGQPIHLSHQPKQEIIAILDKEYGLIER.

Belongs to the SAICAR synthetase family.

It catalyses the reaction 5-amino-1-(5-phospho-D-ribosyl)imidazole-4-carboxylate + L-aspartate + ATP = (2S)-2-[5-amino-1-(5-phospho-beta-D-ribosyl)imidazole-4-carboxamido]succinate + ADP + phosphate + 2 H(+). Its pathway is purine metabolism; IMP biosynthesis via de novo pathway; 5-amino-1-(5-phospho-D-ribosyl)imidazole-4-carboxamide from 5-amino-1-(5-phospho-D-ribosyl)imidazole-4-carboxylate: step 1/2. The polypeptide is Phosphoribosylaminoimidazole-succinocarboxamide synthase (Vibrio cholerae serotype O1 (strain ATCC 39315 / El Tor Inaba N16961)).